A 209-amino-acid chain; its full sequence is Probable peptide export ATP-binding protein YydI (209 aa).

The ABC transporter domain maps to 1-207 (MNIANYTLKV…SVDKLIEVYI (207 aa)). 33–40 (GKNGVGKS) contacts ATP.

Belongs to the ABC transporter superfamily. The complex is composed of two ATP-binding proteins (YydI), two transmembrane proteins (YydJ).

Functionally, suggested to be part of an ABC transporter complex YydIJ involved in export of the modified peptide YydF. Responsible for energy coupling to the transport system. This chain is Probable peptide export ATP-binding protein YydI (yydI), found in Bacillus subtilis (strain 168).